Consider the following 88-residue polypeptide: Phosphocarrier protein HPr (88 aa).

One can recognise an HPr domain in the interval 1 to 88; the sequence is MEQKSYVIID…DILSKEGLTK (88 aa). The active-site Pros-phosphohistidine intermediate is the His-15. Phosphoserine; by HPrK/P is present on Ser-46.

The protein belongs to the HPr family.

It is found in the cytoplasm. Phosphorylation on Ser-46 inhibits the phosphoryl transfer from enzyme I to HPr. Functionally, general (non sugar-specific) component of the phosphoenolpyruvate-dependent sugar phosphotransferase system (sugar PTS). This major carbohydrate active-transport system catalyzes the phosphorylation of incoming sugar substrates concomitantly with their translocation across the cell membrane. The phosphoryl group from phosphoenolpyruvate (PEP) is transferred to the phosphoryl carrier protein HPr by enzyme I. Phospho-HPr then transfers it to the PTS EIIA domain. In Staphylococcus xylosus, this protein is Phosphocarrier protein HPr (ptsH).